A 235-amino-acid polypeptide reads, in one-letter code: Protein CIST1 (235 aa).

A signal peptide spans 1 to 31; it reads MASSQPPLPPPPPPLLLLALLLLLKVSDTSS. 2 stretches are compositionally biased toward low complexity: residues 28 to 61 and 76 to 110; these read DTSS…SSPT and STSH…SQPE. The disordered stretch occupies residues 28 to 159; sequence DTSSSVSTAT…TGPPSVSLAT (132 aa). Residues 32–184 lie on the Extracellular side of the membrane; the sequence is SVSTATSTAS…GVPRLHRNPG (153 aa). N-linked (GlcNAc...) asparagine glycosylation is present at asparagine 45. Positions 114-136 are enriched in polar residues; that stretch reads HPSSGSPSSEHTVTSPSLGSVSL. The chain crosses the membrane as a helical span at residues 185-205; that stretch reads VVVAVCLLVSALLIGGAIMAV. The Cytoplasmic portion of the chain corresponds to 206–235; sequence RRCHNGVSEFQKLDEGLVSRRSSSAHHTLP.

Highly expressed in large intestine, small intestine, rumen, and kidney tissues.

It localises to the membrane. This Bos taurus (Bovine) protein is Protein CIST1 (CIST1).